The chain runs to 230 residues: Geranylgeranylglyceryl phosphate synthase (230 aa).

Lys-13 is a sn-glycerol 1-phosphate binding site. Positions 15 and 41 each coordinate Mg(2+). Sn-glycerol 1-phosphate is bound by residues 161–166 (YIEYSG), Gly-191, and 211–212 (GN).

This sequence belongs to the GGGP/HepGP synthase family. Group I subfamily. It depends on Mg(2+) as a cofactor.

The protein resides in the cytoplasm. It carries out the reaction sn-glycerol 1-phosphate + (2E,6E,10E)-geranylgeranyl diphosphate = sn-3-O-(geranylgeranyl)glycerol 1-phosphate + diphosphate. The protein operates within membrane lipid metabolism; glycerophospholipid metabolism. Its function is as follows. Prenyltransferase that catalyzes the transfer of the geranylgeranyl moiety of geranylgeranyl diphosphate (GGPP) to the C3 hydroxyl of sn-glycerol-1-phosphate (G1P). This reaction is the first ether-bond-formation step in the biosynthesis of archaeal membrane lipids. The protein is Geranylgeranylglyceryl phosphate synthase of Methanoculleus marisnigri (strain ATCC 35101 / DSM 1498 / JR1).